The chain runs to 331 residues: PHD finger protein 11 (331 aa).

A C2HC pre-PHD-type zinc finger spans residues 42–78; the sequence is KRTCALCPKDVEYNVLYFAQSENIAAHENCLLYSSGL. The PHD-type zinc-finger motif lies at 108–160; it reads LKCKFCHKRGATVGCDLKNCNKNYHFFCAKKDDAVPQSDGVRGIYKLLCQQHA.

As to quaternary structure, interacts with BRCA1 and RELA. In terms of tissue distribution, highly expressed in T and B-cells, as well as natural killer and mature dendritic cells. Expressed at higher levels in Th1 as compared to Th2 cells. Expressed at low levels in all normal tissues tested, including lung, testis, small intestine, breast, liver and placenta.

Its subcellular location is the nucleus. In terms of biological role, positive regulator of Th1-type cytokine gene expression. In Homo sapiens (Human), this protein is PHD finger protein 11 (PHF11).